The primary structure comprises 126 residues: MSFIPHDLGRQGEHTAVTFLIEKGYRILQRNYRHRRNEIDIIALDRRTLCFIEVKTRSSASKGHPLEAVTPEKQKEIIRAATAYLSAYPSPEPDCRFDVIAIIAHDFTNGRIREFKLEHITNAFMT.

The protein belongs to the UPF0102 family.

The sequence is that of UPF0102 protein Cphamn1_0017 from Chlorobium phaeobacteroides (strain BS1).